We begin with the raw amino-acid sequence, 153 residues long: Nucleoside diphosphate kinase (153 aa).

Positions 11, 59, 87, 93, 104, and 114 each coordinate ATP. Residue His-117 is the Pros-phosphohistidine intermediate of the active site.

The protein belongs to the NDK family. In terms of assembly, homotrimer. It depends on Mg(2+) as a cofactor.

It carries out the reaction a 2'-deoxyribonucleoside 5'-diphosphate + ATP = a 2'-deoxyribonucleoside 5'-triphosphate + ADP. It catalyses the reaction a ribonucleoside 5'-diphosphate + ATP = a ribonucleoside 5'-triphosphate + ADP. Functionally, major role in the synthesis of nucleoside triphosphates other than ATP. The ATP gamma phosphate is transferred to the NDP beta phosphate via a ping-pong mechanism, using a phosphorylated active-site intermediate. The sequence is that of Nucleoside diphosphate kinase (ndk1) from Aspergillus fumigatus (strain ATCC MYA-4609 / CBS 101355 / FGSC A1100 / Af293) (Neosartorya fumigata).